A 185-amino-acid chain; its full sequence is Folate transporter FolT (185 aa).

Helical transmembrane passes span 34-54 (LTVG…SLIA), 64-84 (LIAA…AFFV), 114-134 (VAVG…WLVM), and 157-177 (LIMF…QVIS).

In E.coli forms a stable energy-coupling factor (ECF) transporter complex probably composed of a membrane-embedded substrate-binding protein (S component), two ATP-binding proteins (A components) and a transmembrane protein (T component).

The protein resides in the cell membrane. Its function is as follows. Folate-binding protein that interacts with the energy-coupling factor (ECF) ABC-transporter complex. Unlike classic ABC transporters this ECF transporter provides the energy necessary to transport a number of different substrates. The substrates themselves are bound by transmembrane, not extracytoplasmic soluble proteins. Upon coexpression with EcfA1A2T in E.coli allows 5-formyltetrahydrofolate uptake; uptake requires both FolT and EcfA1A2T. The protein is Folate transporter FolT (folT) of Leuconostoc mesenteroides subsp. mesenteroides (strain ATCC 8293 / DSM 20343 / BCRC 11652 / CCM 1803 / JCM 6124 / NCDO 523 / NBRC 100496 / NCIMB 8023 / NCTC 12954 / NRRL B-1118 / 37Y).